A 67-amino-acid polypeptide reads, in one-letter code: ATP synthase protein 8 (67 aa).

Residues 8-24 (TWFTTVLSTTITLFILM) traverse the membrane as a helical segment. Lys54 bears the N6-acetyllysine; alternate mark. Lys54 carries the post-translational modification N6-succinyllysine; alternate. Residue Lys57 is modified to N6-acetyllysine.

This sequence belongs to the ATPase protein 8 family. As to quaternary structure, F-type ATPases have 2 components, CF(1) - the catalytic core - and CF(0) - the membrane proton channel. Component of an ATP synthase complex composed of ATP5PB, ATP5MC1, ATP5F1E, ATP5PD, ATP5ME, ATP5PF, ATP5MF, MT-ATP6, MT-ATP8, ATP5F1A, ATP5F1B, ATP5F1D, ATP5F1C, ATP5PO, ATP5MG, ATP5MK and ATP5MJ. Interacts with PRICKLE3.

It is found in the mitochondrion membrane. Its function is as follows. Mitochondrial membrane ATP synthase (F(1)F(0) ATP synthase or Complex V) produces ATP from ADP in the presence of a proton gradient across the membrane which is generated by electron transport complexes of the respiratory chain. F-type ATPases consist of two structural domains, F(1) - containing the extramembraneous catalytic core and F(0) - containing the membrane proton channel, linked together by a central stalk and a peripheral stalk. During catalysis, ATP synthesis in the catalytic domain of F(1) is coupled via a rotary mechanism of the central stalk subunits to proton translocation. Part of the complex F(0) domain. Minor subunit located with subunit a in the membrane. This Microtus pennsylvanicus (Meadow vole) protein is ATP synthase protein 8 (MT-ATP8).